The following is a 184-amino-acid chain: Intraflagellar transport protein 22 homolog (184 aa).

GTP-binding positions include G10–T17, D62–D66, and K122–G125.

Belongs to the small GTPase superfamily. Rab family.

This Xenopus tropicalis (Western clawed frog) protein is Intraflagellar transport protein 22 homolog (ift22).